The chain runs to 286 residues: Probable aquaporin PIP2-5 (286 aa).

M1 carries the post-translational modification N-acetylmethionine. A compositionally biased stretch (basic and acidic residues) spans 1–18; the sequence is MTKEVVGDKRSFSGKDYQ. The segment at 1–23 is disordered; that stretch reads MTKEVVGDKRSFSGKDYQDPPPE. The Cytoplasmic segment spans residues 1 to 38; sequence MTKEVVGDKRSFSGKDYQDPPPEPLFDATELGKWSFYR. K3 carries the N6,N6-dimethyllysine modification. A helical transmembrane segment spans residues 39-59; the sequence is ALIAEFIATLLFLYVTIMTVI. Residues 60-75 lie on the Extracellular side of the membrane; sequence GYKSQTDPALNPDQCT. A helical transmembrane segment spans residues 76 to 96; that stretch reads GVGVLGIAWAFGGMIFILVYC. Residues 97 to 124 are Cytoplasmic-facing; that stretch reads TAGISGGHINPAVTFGLLLARKVTLVRA. The NPA 1 motif lies at 106–108; that stretch reads NPA. The helical transmembrane segment at 125–145 threads the bilayer; that stretch reads VMYMVAQCLGAICGVALVKAF. The Extracellular portion of the chain corresponds to 146–165; sequence QSAYFTRYGGGANGLSDGYS. Residues 166–186 form a helical membrane-spanning segment; that stretch reads IGTGVAAEIIGTFVLVYTVFS. Over 187–200 the chain is Cytoplasmic; sequence ATDPKRSARDSHVP. A helical transmembrane segment spans residues 201-221; sequence VLAPLPIGFAVFIVHLATIPI. Topologically, residues 222–248 are extracellular; the sequence is TGTGINPARSLGAAIIYNKDKAWDHHW. Residues 227-229 carry the NPA 2 motif; the sequence is NPA. The chain crosses the membrane as a helical span at residues 249–269; the sequence is IFWVGPFAGAAIAAFYHQFVL. Over 270–286 the chain is Cytoplasmic; that stretch reads RAGAIKALGSFRSQPHV. Phosphoserine occurs at positions 279 and 282.

It belongs to the MIP/aquaporin (TC 1.A.8) family. PIP (TC 1.A.8.11) subfamily. Expressed in green siliques.

It localises to the cell membrane. Its function is as follows. Aquaporins facilitate the transport of water and small neutral solutes across cell membranes. The chain is Probable aquaporin PIP2-5 (PIP2-5) from Arabidopsis thaliana (Mouse-ear cress).